The sequence spans 348 residues: Competence protein ComGA (348 aa).

145 to 152 lines the ATP pocket; sequence GATGSGKT.

This sequence belongs to the GSP E family.

The protein resides in the cell membrane. Required for uptake of DNA by competent cells. This Halalkalibacterium halodurans (strain ATCC BAA-125 / DSM 18197 / FERM 7344 / JCM 9153 / C-125) (Bacillus halodurans) protein is Competence protein ComGA (comGA).